The chain runs to 286 residues: Thymidylate synthase (286 aa).

Residue 140 to 141 (RR) coordinates dUMP. The active-site Nucleophile is C161. Residues 185-188 (RSND), N196, and 226-228 (HIY) contribute to the dUMP site. D188 lines the (6R)-5,10-methylene-5,6,7,8-tetrahydrofolate pocket. A285 serves as a coordination point for (6R)-5,10-methylene-5,6,7,8-tetrahydrofolate.

This sequence belongs to the thymidylate synthase family. Bacterial-type ThyA subfamily. Homodimer.

It is found in the cytoplasm. It catalyses the reaction dUMP + (6R)-5,10-methylene-5,6,7,8-tetrahydrofolate = 7,8-dihydrofolate + dTMP. It participates in pyrimidine metabolism; dTTP biosynthesis. Catalyzes the reductive methylation of 2'-deoxyuridine-5'-monophosphate (dUMP) to 2'-deoxythymidine-5'-monophosphate (dTMP) while utilizing 5,10-methylenetetrahydrofolate (mTHF) as the methyl donor and reductant in the reaction, yielding dihydrofolate (DHF) as a by-product. This enzymatic reaction provides an intracellular de novo source of dTMP, an essential precursor for DNA biosynthesis. The sequence is that of Thymidylate synthase from Streptococcus thermophilus (strain CNRZ 1066).